The primary structure comprises 307 residues: Undecaprenyl-diphosphatase 2 (307 aa).

8 helical membrane-spanning segments follow: residues 19–41, 56–76, 117–137, 144–164, 208–228, 229–249, 251–271, and 285–305; these read GVTEFLPVSSTGHMIILGSIIGF, IHMFEIIIQLGAILAIVVLYW, FKFWTNIVVACIPAIVIGLPF, LLFFPAPVAAALMVGAVWMIF, IIGAWIVGVATVAGAEFSFFL, AIPMMLGASLLFLIKNSVVLS, VQILGLAVGFIVAFIVALVVV, and IFAVYRLAIGIIVLVLGFTKV.

Belongs to the UppP family.

It localises to the cell membrane. The enzyme catalyses di-trans,octa-cis-undecaprenyl diphosphate + H2O = di-trans,octa-cis-undecaprenyl phosphate + phosphate + H(+). Its function is as follows. Catalyzes the dephosphorylation of undecaprenyl diphosphate (UPP). Confers resistance to bacitracin. This is Undecaprenyl-diphosphatase 2 from Clostridium acetobutylicum (strain ATCC 824 / DSM 792 / JCM 1419 / IAM 19013 / LMG 5710 / NBRC 13948 / NRRL B-527 / VKM B-1787 / 2291 / W).